The primary structure comprises 47 residues: MNVLSGQSLGTVDELTLNMSQPKVPIRSPAPLLDVEALPPCLQIFRP.

This is an uncharacterized protein from Saccharomyces cerevisiae (strain ATCC 204508 / S288c) (Baker's yeast).